The primary structure comprises 173 residues: Adenine phosphoribosyltransferase (173 aa).

The protein belongs to the purine/pyrimidine phosphoribosyltransferase family. In terms of assembly, homodimer.

It localises to the cytoplasm. The enzyme catalyses AMP + diphosphate = 5-phospho-alpha-D-ribose 1-diphosphate + adenine. Its pathway is purine metabolism; AMP biosynthesis via salvage pathway; AMP from adenine: step 1/1. Functionally, catalyzes a salvage reaction resulting in the formation of AMP, that is energically less costly than de novo synthesis. The protein is Adenine phosphoribosyltransferase of Solibacter usitatus (strain Ellin6076).